The chain runs to 335 residues: Beta-ketoacyl-[acyl-carrier-protein] synthase III (335 aa).

Residues C119 and H261 contribute to the active site. Residues 262 to 266 (QANQR) are ACP-binding. N291 is an active-site residue.

This sequence belongs to the thiolase-like superfamily. FabH family. Homodimer.

It localises to the cytoplasm. It carries out the reaction malonyl-[ACP] + acetyl-CoA + H(+) = 3-oxobutanoyl-[ACP] + CO2 + CoA. It participates in lipid metabolism; fatty acid biosynthesis. Catalyzes the condensation reaction of fatty acid synthesis by the addition to an acyl acceptor of two carbons from malonyl-ACP. Catalyzes the first condensation reaction which initiates fatty acid synthesis and may therefore play a role in governing the total rate of fatty acid production. Possesses both acetoacetyl-ACP synthase and acetyl transacylase activities. Its substrate specificity determines the biosynthesis of branched-chain and/or straight-chain of fatty acids. The polypeptide is Beta-ketoacyl-[acyl-carrier-protein] synthase III (Prochlorococcus marinus subsp. pastoris (strain CCMP1986 / NIES-2087 / MED4)).